Consider the following 555-residue polypeptide: Glutamine--tRNA ligase (555 aa).

Residues 34 to 44 (PEPNGYLHIGH) carry the 'HIGH' region motif. ATP-binding positions include 35–37 (EPN) and 41–47 (HIGHAKS). Aspartate 67 and tyrosine 212 together coordinate L-glutamine. ATP-binding positions include threonine 231, 261-262 (RL), and 269-271 (MSK). The 'KMSKS' region motif lies at 268–272 (IMSKR).

The protein belongs to the class-I aminoacyl-tRNA synthetase family. Monomer.

The protein localises to the cytoplasm. The catalysed reaction is tRNA(Gln) + L-glutamine + ATP = L-glutaminyl-tRNA(Gln) + AMP + diphosphate. This chain is Glutamine--tRNA ligase, found in Yersinia pseudotuberculosis serotype O:3 (strain YPIII).